The primary structure comprises 176 residues: Ribosome maturation factor RimM (176 aa).

Positions D93 to L168 constitute a PRC barrel domain.

The protein belongs to the RimM family. As to quaternary structure, binds ribosomal protein uS19.

The protein resides in the cytoplasm. Its function is as follows. An accessory protein needed during the final step in the assembly of 30S ribosomal subunit, possibly for assembly of the head region. Essential for efficient processing of 16S rRNA. May be needed both before and after RbfA during the maturation of 16S rRNA. It has affinity for free ribosomal 30S subunits but not for 70S ribosomes. The protein is Ribosome maturation factor RimM of Oleidesulfovibrio alaskensis (strain ATCC BAA-1058 / DSM 17464 / G20) (Desulfovibrio alaskensis).